We begin with the raw amino-acid sequence, 686 residues long: Probable serine/threonine-protein kinase pdkA (686 aa).

The interval 1–31 (MENIVITNTSGGGGGGVPSSSTDPPNNTTTT) is disordered. Residues 18–31 (PSSSTDPPNNTTTT) are compositionally biased toward low complexity. The Protein kinase domain occupies 69 to 449 (FIIGKVLGEG…FDNLKAHPFF (381 aa)). ATP-binding positions include 79 to 81 (SYG) and Lys98. The PIF-pocket stretch occupies residues 100 to 144 (LEKKQIIKENKIKYVQIEKEIFCKSNHPNIVKLFFTFRSEQCLYY). ATP contacts are provided by residues 147–149 (ELC) and Asp153. Residue Asp192 is the Proton acceptor of the active site. 2 residues coordinate ATP: Glu196 and Asp210. 2 disordered regions span residues 211–321 (FGTG…NTNT) and 481–584 (LFSP…NNIS). Low complexity predominate over residues 222-257 (SSQQQQQQQQQQQQLPTNSSGNLSSLLNNVNNLSVS). A compositionally biased stretch (polar residues) spans 258-267 (TDLTQQQQNR). Composition is skewed to low complexity over residues 268-279 (TSSVDSASTTDS), 288-321 (TTTTTNNNNNNNNNNNNNNNNTAAGSNTNTNTNT), and 503-568 (NSCN…QRSG). A PH domain is found at 593–682 (VIYQGLVWKR…DSIKSVILSS (90 aa)).

This sequence belongs to the protein kinase superfamily. AGC Ser/Thr protein kinase family. PDPK1 subfamily.

The enzyme catalyses L-seryl-[protein] + ATP = O-phospho-L-seryl-[protein] + ADP + H(+). It carries out the reaction L-threonyl-[protein] + ATP = O-phospho-L-threonyl-[protein] + ADP + H(+). This is Probable serine/threonine-protein kinase pdkA (pdkA) from Dictyostelium discoideum (Social amoeba).